We begin with the raw amino-acid sequence, 156 residues long: 3-dehydroquinate dehydratase (156 aa).

Tyr-22 acts as the Proton acceptor in catalysis. Residues Asn-73, His-79, and Asp-86 each coordinate substrate. His-99 serves as the catalytic Proton donor. Substrate contacts are provided by residues 100–101 (LS) and Arg-110.

The protein belongs to the type-II 3-dehydroquinase family. Homododecamer.

It catalyses the reaction 3-dehydroquinate = 3-dehydroshikimate + H2O. It participates in metabolic intermediate biosynthesis; chorismate biosynthesis; chorismate from D-erythrose 4-phosphate and phosphoenolpyruvate: step 3/7. Catalyzes a trans-dehydration via an enolate intermediate. This Nitratiruptor sp. (strain SB155-2) protein is 3-dehydroquinate dehydratase.